The chain runs to 631 residues: uncharacterized protein (631 aa).

A run of 9 helical transmembrane segments spans residues 42–62 (VLVGALAGHTDYGLIASIGGF), 76–96 (ALKLLLVSIGIALSFGLGTLL), 106–128 (VLGLIGAAAMFIFSALGIQGPAP), 152–172 (AGLTFLGGIFAMGIALIGWLW), 344–364 (ALKYGIVLFAADMFALAFGFA), 366–386 (SYWIPLSAAAVMLGTTVVFTL), 398–418 (IGVILAGAILFFKPGGVYIAF), 429–449 (MLIVRNYALAVPFLTANALVI), and 464–484 (IARLTDVAVGSVIGLLGTMLL).

The protein belongs to the YccS/YhfK family.

It is found in the cell membrane. This is an uncharacterized protein from Bacillus subtilis (strain 168).